Consider the following 615-residue polypeptide: Membrane protein insertase YidC (615 aa).

5 consecutive transmembrane segments (helical) span residues 9–29 (LMFI…VLGP), 384–404 (LVGN…LVLY), 458–478 (LPML…TVTI), 516–536 (LIGA…FTMW), and 556–576 (WFPV…VIYW).

This sequence belongs to the OXA1/ALB3/YidC family. Type 1 subfamily. Interacts with the Sec translocase complex via SecD. Specifically interacts with transmembrane segments of nascent integral membrane proteins during membrane integration.

The protein resides in the cell inner membrane. Required for the insertion and/or proper folding and/or complex formation of integral membrane proteins into the membrane. Involved in integration of membrane proteins that insert both dependently and independently of the Sec translocase complex, as well as at least some lipoproteins. Aids folding of multispanning membrane proteins. This Caulobacter vibrioides (strain ATCC 19089 / CIP 103742 / CB 15) (Caulobacter crescentus) protein is Membrane protein insertase YidC.